The following is a 491-amino-acid chain: UDP-N-acetylmuramate--L-alanine ligase (491 aa).

ATP is bound at residue 126-132 (GTHGKTT).

It belongs to the MurCDEF family.

The protein resides in the cytoplasm. The enzyme catalyses UDP-N-acetyl-alpha-D-muramate + L-alanine + ATP = UDP-N-acetyl-alpha-D-muramoyl-L-alanine + ADP + phosphate + H(+). The protein operates within cell wall biogenesis; peptidoglycan biosynthesis. Cell wall formation. The chain is UDP-N-acetylmuramate--L-alanine ligase from Shigella flexneri.